The following is a 404-amino-acid chain: Argininosuccinate synthase (404 aa).

ATP contacts are provided by residues 12 to 20 (AYSGGLDTS) and Ala-40. Tyr-92 and Ser-97 together coordinate L-citrulline. Gly-122 lines the ATP pocket. L-aspartate-binding residues include Thr-124, Asn-128, and Asp-129. Asn-128 serves as a coordination point for L-citrulline. The L-citrulline site is built by Arg-132, Ser-181, Ser-190, Glu-266, and Tyr-278.

Belongs to the argininosuccinate synthase family. Type 1 subfamily. Homotetramer.

The protein localises to the cytoplasm. The catalysed reaction is L-citrulline + L-aspartate + ATP = 2-(N(omega)-L-arginino)succinate + AMP + diphosphate + H(+). It functions in the pathway amino-acid biosynthesis; L-arginine biosynthesis; L-arginine from L-ornithine and carbamoyl phosphate: step 2/3. This Photorhabdus laumondii subsp. laumondii (strain DSM 15139 / CIP 105565 / TT01) (Photorhabdus luminescens subsp. laumondii) protein is Argininosuccinate synthase.